A 476-amino-acid chain; its full sequence is Protein transport protein Sec61 subunit alpha isoform A (476 aa).

Residues 2–33 (GIKFLEVIKPFCAVLPEIQKPERKIQFREKVL) lie on the Cytoplasmic side of the membrane. Residues 34-53 (WTAITLFIFLVCCQIPLFGI) traverse the membrane as a helical segment. At 54–76 (MSSDSADPFYWMRVILASNRGTL) the chain is on the lumenal side. A helical transmembrane segment spans residues 77–96 (MELGISPIVTSGLIMQLLAG). Over 97 to 117 (AKIIEVGDTPKDRALFNGAQK) the chain is Cytoplasmic. A helical membrane pass occupies residues 118-138 (LFGMIITIGQSIVYVMTGMYG). Topologically, residues 139-144 (DPSEMG) are lumenal. A helical membrane pass occupies residues 145–165 (AGICLLIIIQLFVAGLIVLLL). Residues 166–172 (DELLQKG) lie on the Cytoplasmic side of the membrane. A helical transmembrane segment spans residues 173-193 (YGLGSGISLFIATNICETIVW). At 194-240 (KAFSPTTVNTGRGTEFEGAIIALFHLLATRTDKVRALREAFYRQNLP) the chain is on the lumenal side. A helical membrane pass occupies residues 241–261 (NLLNLIATVFVFAVVIYFQGF). The Cytoplasmic segment spans residues 262-288 (RVDLPIKSARYRGQYNTYPIKLFYTSN). Residues 289–309 (IPIILQSALVSNLYVISQMLS) form a helical membrane-spanning segment. Topologically, residues 310 to 354 (TRFSGNFLVNLLGTWSDTSTGGPARAYPVGGLCYFLSPPESFGSV) are lumenal. A helical membrane pass occupies residues 355-375 (LDDPIHAAIYIVFMLGSCAFF). The Cytoplasmic portion of the chain corresponds to 376–420 (SKTWIEVSGSSAKDVAKQLKEQQMVMGGHRETSMVHELNRYIPTA). The helical transmembrane segment at 421–441 (AAFGGLCIGGLSVMADFLGAI) threads the bilayer. Residues 442–445 (GSGT) are Lumenal-facing. Residues 446–462 (GILLAVTIIYQYFEIFV) traverse the membrane as a helical segment. The Cytoplasmic portion of the chain corresponds to 463–476 (KEQSEMGSMGALLF).

It belongs to the SecY/SEC61-alpha family. The SEC61 channel-forming translocon complex consists of channel-forming core components SEC61A1, SEC61B and SEC61G and different auxiliary components such as SEC62 and SEC63. The SEC61 channel associates with the multi-pass translocon (MPT) complex.

Its subcellular location is the endoplasmic reticulum membrane. Its function is as follows. Component of SEC61 channel-forming translocon complex that mediates transport of signal peptide-containing precursor polypeptides across the endoplasmic reticulum (ER). Forms a ribosome receptor and a gated pore in the ER membrane, both functions required for cotranslational translocation of nascent polypeptides. May cooperate with auxiliary protein SEC62, SEC63 and HSPA5/BiP to enable post-translational transport of small presecretory proteins. The SEC61 channel is also involved in ER membrane insertion of transmembrane proteins: it mediates membrane insertion of the first few transmembrane segments of proteins, while insertion of subsequent transmembrane regions of multi-pass membrane proteins is mediated by the multi-pass translocon (MPT) complex. This is Protein transport protein Sec61 subunit alpha isoform A (sec61aa) from Oncorhynchus mykiss (Rainbow trout).